Here is a 261-residue protein sequence, read N- to C-terminus: Imidazole glycerol phosphate synthase subunit HisF (261 aa).

Residues Asp-12 and Asp-131 contribute to the active site.

It belongs to the HisA/HisF family. In terms of assembly, heterodimer of HisH and HisF.

It is found in the cytoplasm. The catalysed reaction is 5-[(5-phospho-1-deoxy-D-ribulos-1-ylimino)methylamino]-1-(5-phospho-beta-D-ribosyl)imidazole-4-carboxamide + L-glutamine = D-erythro-1-(imidazol-4-yl)glycerol 3-phosphate + 5-amino-1-(5-phospho-beta-D-ribosyl)imidazole-4-carboxamide + L-glutamate + H(+). The protein operates within amino-acid biosynthesis; L-histidine biosynthesis; L-histidine from 5-phospho-alpha-D-ribose 1-diphosphate: step 5/9. Functionally, IGPS catalyzes the conversion of PRFAR and glutamine to IGP, AICAR and glutamate. The HisF subunit catalyzes the cyclization activity that produces IGP and AICAR from PRFAR using the ammonia provided by the HisH subunit. The polypeptide is Imidazole glycerol phosphate synthase subunit HisF (Brucella anthropi (strain ATCC 49188 / DSM 6882 / CCUG 24695 / JCM 21032 / LMG 3331 / NBRC 15819 / NCTC 12168 / Alc 37) (Ochrobactrum anthropi)).